Here is a 439-residue protein sequence, read N- to C-terminus: GTPase Der (439 aa).

EngA-type G domains lie at 4–169 (AMVS…PQEE) and 177–352 (IKIA…EEYN). Residues 10-17 (GRPNVGKS), 57-61 (DTGGL), 120-123 (NKVD), 183-190 (GKPNVGKS), 230-234 (DTAGI), and 295-298 (NKWD) each bind GTP. Residues 353 to 437 (KRITTGLLNN…PVVISTRKRG (85 aa)) enclose the KH-like domain.

This sequence belongs to the TRAFAC class TrmE-Era-EngA-EngB-Septin-like GTPase superfamily. EngA (Der) GTPase family. Associates with the 50S ribosomal subunit.

In terms of biological role, GTPase that plays an essential role in the late steps of ribosome biogenesis. The polypeptide is GTPase Der (Thermoanaerobacter pseudethanolicus (strain ATCC 33223 / 39E) (Clostridium thermohydrosulfuricum)).